The primary structure comprises 364 residues: Probable methyltransferase ICS2 (364 aa).

S-adenosyl-L-homocysteine contacts are provided by Tyr18, Cys61, Asp98, Leu99, Ser133, and Phe134. Positions 172, 258, 260, and 261 each coordinate Mg(2+).

It belongs to the methyltransferase superfamily. Type-7 methyltransferase family. The cofactor is Mg(2+).

Functionally, no detectable N-methyltransferase activity. The sequence is that of Probable methyltransferase ICS2 from Camellia irrawadiensis (Burmese tea).